The following is a 119-amino-acid chain: Large ribosomal subunit protein uL14 (119 aa).

It belongs to the universal ribosomal protein uL14 family. As to quaternary structure, part of the 50S ribosomal subunit. Forms a cluster with proteins L3 and L19. In the 70S ribosome, L14 and L19 interact and together make contacts with the 16S rRNA in bridges B5 and B8.

Functionally, binds to 23S rRNA. Forms part of two intersubunit bridges in the 70S ribosome. The sequence is that of Large ribosomal subunit protein uL14 from Ehrlichia ruminantium (strain Gardel).